A 350-amino-acid chain; its full sequence is MRFEGIMNDIMDFRNLSEDEAHDLMEMIMDGEMGDVQIAALLTALAMKGETVDEITGFARAMRERAVKVKIPESMRVVDACGTGGDRFKSYNVSTAAAIIAAAAGVKVAKHGNRAVTGSCGGADILEAAGVNIELGPEAACRSLETLGIAFMFAPLFHRATARVAPVRRELGFKTVFNILGPLTSPASAEVQLLGVFDPYLVGPVAEVLRNLGVKRAMVVHGFDGNMNPAMDEISTVGPTLVGFLEDDEIGIKRLMPPDFGVDVGQLQHLKAASTVDGNLRMFMDVLAGLDDTPGRKSRLDIALANAGALIYLAEMEDTLEGGTEAARETVESGAALRLMEDFASFTQNL.

Residues G82, 85–86 (GD), S90, 92–95 (NVST), 110–118 (KHGNRAVTG), and G122 each bind 5-phospho-alpha-D-ribose 1-diphosphate. G82 contacts anthranilate. Position 94 (S94) interacts with Mg(2+). An anthranilate-binding site is contributed by N113. R168 is an anthranilate binding site. The Mg(2+) site is built by D232 and E233.

It belongs to the anthranilate phosphoribosyltransferase family. Homodimer. Mg(2+) serves as cofactor.

It carries out the reaction N-(5-phospho-beta-D-ribosyl)anthranilate + diphosphate = 5-phospho-alpha-D-ribose 1-diphosphate + anthranilate. It participates in amino-acid biosynthesis; L-tryptophan biosynthesis; L-tryptophan from chorismate: step 2/5. Functionally, catalyzes the transfer of the phosphoribosyl group of 5-phosphorylribose-1-pyrophosphate (PRPP) to anthranilate to yield N-(5'-phosphoribosyl)-anthranilate (PRA). The chain is Anthranilate phosphoribosyltransferase from Methanothermobacter marburgensis (strain ATCC BAA-927 / DSM 2133 / JCM 14651 / NBRC 100331 / OCM 82 / Marburg) (Methanobacterium thermoautotrophicum).